A 159-amino-acid chain; its full sequence is Ribosome maturation factor RimP (159 aa).

The protein belongs to the RimP family.

It is found in the cytoplasm. In terms of biological role, required for maturation of 30S ribosomal subunits. This chain is Ribosome maturation factor RimP, found in Bordetella avium (strain 197N).